The following is a 504-amino-acid chain: MNVKPEEITSIIKSQIEKYEKKIETVDSGTIIQIGDGIARVYGLNGCMAGELLEFPNDVYAMALNLEQDNVGCVLLGSQEGIKEGNTVKRTGKVVEVPVGENIIGRVVNSLGHPIDGKGAISTTETRAVELVAPGVITRQAVKQPLQTGIKAIDAMIPIGRGQRELIIGDRQTGKTAIAMDTIINQKGKDVICIYVAIGQKQSTVAHIVNNLIETNAMDYTIVVSAAASESAPLQYIAPYAGCSMGEYFMNKGKDVLIVYDDLSKHAVAYRAMSLLLRRPPGREAYPGDVFYLHSRLLERAAKLSDKLGGGSLTALPIIETLAGDVTAYIPTNVISITDGQIFLETELFYSGQRPAINAGISVSRVGGNAQIKAMKQVAGTLRIDLAQYRELASFAQFGSDLDKESKRTLEKGKRLTEILKQPQYKPMAVEKQVMILFAASRNYIMDIPVERISEFEEEFLDYMDTHHREIGDEIKEKQVISDELSDKLRNAIEEFKKIFLIEG.

169–176 contributes to the ATP binding site; sequence GDRQTGKT.

This sequence belongs to the ATPase alpha/beta chains family. In terms of assembly, F-type ATPases have 2 components, CF(1) - the catalytic core - and CF(0) - the membrane proton channel. CF(1) has five subunits: alpha(3), beta(3), gamma(1), delta(1), epsilon(1). CF(0) has three main subunits: a(1), b(2) and c(9-12). The alpha and beta chains form an alternating ring which encloses part of the gamma chain. CF(1) is attached to CF(0) by a central stalk formed by the gamma and epsilon chains, while a peripheral stalk is formed by the delta and b chains.

The protein resides in the cell membrane. It carries out the reaction ATP + H2O + 4 H(+)(in) = ADP + phosphate + 5 H(+)(out). Its function is as follows. Produces ATP from ADP in the presence of a proton gradient across the membrane. The alpha chain is a regulatory subunit. The protein is ATP synthase subunit alpha of Clostridium kluyveri (strain NBRC 12016).